We begin with the raw amino-acid sequence, 539 residues long: O-phosphoserine--tRNA(Cys) ligase (539 aa).

Substrate contacts are provided by residues 188-190, 233-235, 275-276, and N327; these read HMT, SAS, and YY.

Belongs to the class-II aminoacyl-tRNA synthetase family. O-phosphoseryl-tRNA(Cys) synthetase subfamily. Homotetramer. Interacts with SepCysS.

The enzyme catalyses tRNA(Cys) + O-phospho-L-serine + ATP = O-phospho-L-seryl-tRNA(Cys) + AMP + diphosphate. Functionally, catalyzes the attachment of O-phosphoserine (Sep) to tRNA(Cys). This is O-phosphoserine--tRNA(Cys) ligase from Methanosarcina barkeri (strain Fusaro / DSM 804).